Reading from the N-terminus, the 207-residue chain is FMN-dependent NADH:quinone oxidoreductase 1 (207 aa).

Residues Ser9, 15 to 17, and 139 to 142 each bind FMN; these read SIS and TRGG.

This sequence belongs to the azoreductase type 1 family. In terms of assembly, homodimer. FMN serves as cofactor.

The enzyme catalyses 2 a quinone + NADH + H(+) = 2 a 1,4-benzosemiquinone + NAD(+). The catalysed reaction is N,N-dimethyl-1,4-phenylenediamine + anthranilate + 2 NAD(+) = 2-(4-dimethylaminophenyl)diazenylbenzoate + 2 NADH + 2 H(+). Quinone reductase that provides resistance to thiol-specific stress caused by electrophilic quinones. Its function is as follows. Also exhibits azoreductase activity. Catalyzes the reductive cleavage of the azo bond in aromatic azo compounds to the corresponding amines. The protein is FMN-dependent NADH:quinone oxidoreductase 1 of Trichormus variabilis (strain ATCC 29413 / PCC 7937) (Anabaena variabilis).